We begin with the raw amino-acid sequence, 443 residues long: F-box only protein 39 (443 aa).

One can recognise an F-box domain in the interval 13-59 (QSCWATLPDVCLRRVFWWLGDRDRSRAALVCRKWNQIMYSADLWRYR).

As to quaternary structure, directly interacts with SKP1 and CUL1.

In terms of biological role, substrate-recognition component of the SCF (SKP1-CUL1-F-box protein)-type E3 ubiquitin ligase complex. This chain is F-box only protein 39 (Fbxo39), found in Mus musculus (Mouse).